Reading from the N-terminus, the 312-residue chain is Malate dehydrogenase (312 aa).

NAD(+) contacts are provided by residues 10–15 (GAGNTG) and Asp34. Residues Arg85 and Arg91 each coordinate substrate. Residues Asn98 and 121–123 (LTN) each bind NAD(+). 2 residues coordinate substrate: Asn123 and Arg154. His178 acts as the Proton acceptor in catalysis.

This sequence belongs to the LDH/MDH superfamily. MDH type 3 family.

The enzyme catalyses (S)-malate + NAD(+) = oxaloacetate + NADH + H(+). Functionally, catalyzes the reversible oxidation of malate to oxaloacetate. The chain is Malate dehydrogenase from Staphylococcus saprophyticus subsp. saprophyticus (strain ATCC 15305 / DSM 20229 / NCIMB 8711 / NCTC 7292 / S-41).